A 1391-amino-acid chain; its full sequence is DNA-directed RNA polymerase subunit beta' (1391 aa).

Residues cysteine 72, cysteine 74, cysteine 87, and cysteine 90 each coordinate Zn(2+). Residues aspartate 462, aspartate 464, and aspartate 466 each contribute to the Mg(2+) site. Cysteine 816, cysteine 890, cysteine 897, and cysteine 900 together coordinate Zn(2+).

Belongs to the RNA polymerase beta' chain family. The RNAP catalytic core consists of 2 alpha, 1 beta, 1 beta' and 1 omega subunit. When a sigma factor is associated with the core the holoenzyme is formed, which can initiate transcription. It depends on Mg(2+) as a cofactor. The cofactor is Zn(2+).

The catalysed reaction is RNA(n) + a ribonucleoside 5'-triphosphate = RNA(n+1) + diphosphate. Functionally, DNA-dependent RNA polymerase catalyzes the transcription of DNA into RNA using the four ribonucleoside triphosphates as substrates. This is DNA-directed RNA polymerase subunit beta' from Neisseria meningitidis serogroup C (strain 053442).